A 130-amino-acid chain; its full sequence is Small ribosomal subunit protein uS9 (130 aa).

It belongs to the universal ribosomal protein uS9 family.

The polypeptide is Small ribosomal subunit protein uS9 (Burkholderia cenocepacia (strain HI2424)).